The chain runs to 561 residues: Arginine--tRNA ligase (561 aa).

The 'HIGH' region motif lies at 123–133; it reads PNIAKDMHVGH.

This sequence belongs to the class-I aminoacyl-tRNA synthetase family. As to quaternary structure, monomer.

It localises to the cytoplasm. It carries out the reaction tRNA(Arg) + L-arginine + ATP = L-arginyl-tRNA(Arg) + AMP + diphosphate. The polypeptide is Arginine--tRNA ligase (argS) (Chlamydia pneumoniae (Chlamydophila pneumoniae)).